Reading from the N-terminus, the 81-residue chain is MSHSVKIYDTCIGCTQCVRACPTDVLEMIPWDGCKAKQIASAPRTEDCVGCKRCESACPTDFLSVRVYLRSETTRSMALSY.

4Fe-4S ferredoxin-type domains follow at residues 2–31 (SHSV…MIPW) and 39–68 (IASA…VRVY). Cys-11, Cys-14, Cys-17, Cys-21, Cys-48, Cys-51, Cys-54, and Cys-58 together coordinate [4Fe-4S] cluster.

As to quaternary structure, the eukaryotic PSI reaction center is composed of at least 11 subunits. [4Fe-4S] cluster serves as cofactor.

The protein localises to the plastid. The protein resides in the chloroplast thylakoid membrane. The catalysed reaction is reduced [plastocyanin] + hnu + oxidized [2Fe-2S]-[ferredoxin] = oxidized [plastocyanin] + reduced [2Fe-2S]-[ferredoxin]. In terms of biological role, apoprotein for the two 4Fe-4S centers FA and FB of photosystem I (PSI); essential for photochemical activity. FB is the terminal electron acceptor of PSI, donating electrons to ferredoxin. The C-terminus interacts with PsaA/B/D and helps assemble the protein into the PSI complex. Required for binding of PsaD and PsaE to PSI. PSI is a plastocyanin-ferredoxin oxidoreductase, converting photonic excitation into a charge separation, which transfers an electron from the donor P700 chlorophyll pair to the spectroscopically characterized acceptors A0, A1, FX, FA and FB in turn. In Sorghum bicolor (Sorghum), this protein is Photosystem I iron-sulfur center.